A 56-amino-acid polypeptide reads, in one-letter code: MVKIDYKKCGYCGACVGVCEKLAINLIEHIIVIDEKKCNNCKLCTIVCPLNALEGE.

4Fe-4S ferredoxin-type domains follow at residues 2 to 28 (VKID…NLIE) and 29 to 56 (HIIV…LEGE). 8 residues coordinate [4Fe-4S] cluster: cysteine 9, cysteine 12, cysteine 15, cysteine 19, cysteine 38, cysteine 41, cysteine 44, and cysteine 48.

It depends on [4Fe-4S] cluster as a cofactor.

In terms of biological role, ferredoxins are iron-sulfur proteins that transfer electrons in a wide variety of metabolic reactions. This is an uncharacterized protein from Methanocaldococcus jannaschii (strain ATCC 43067 / DSM 2661 / JAL-1 / JCM 10045 / NBRC 100440) (Methanococcus jannaschii).